Reading from the N-terminus, the 580-residue chain is MGVMKRYMQFVKPYKKQIFVTVLIGIVKFSIPLALPLLLKYVVDDIIQGGGTASDKTTSLFTIMAIMFALFLILRPPVEYYRQYFAQWTASKVLYDIRAKLFDHIQKLSLRFYANTRTGEVISRVINDVEQTKDFVITGLMNIWLDMLTILIVISIMLTLDVKLTLISIVLFPLYGISVKYFYGRLRKLTRERSQALAQVQGHLHERIQGMPVIRSFAIEDHEQAQFNEKNGHFLDKAIRHTNWNAKTFAVVNTITDLAPLIVIACAGYFVINGPLTVGTMVAFVGYIDRMYNPVRRLINSSTTLTQSIASMDRVFEFIDEPYELTDKPNAIKADQIRGGVEFQNVSFQYEKDKENILHDVSLKVNRGETVALVGMSGGGKSTLVSLIPRFYDVTSGRLLIDGTDIRDYEARSLRNQVGMVLQDTFLFSETIRENIAIGKPDATLEEIIEAAKAANAHEFIMSFPEGYETRVGERGVKLSGGQKQRISIARVFLKNPPLLILDEATSALDLESEHYIQEAMDKLAKDRTTFVVAHRLSTITHADKIVVMENGTIIEIGTHDELMDYESQYKHLFTIQNLN.

At 1 to 17 (MGVMKRYMQFVKPYKKQ) the chain is on the cytoplasmic side. Residues 18-38 (IFVTVLIGIVKFSIPLALPLL) traverse the membrane as a helical segment. Residues 19–307 (FVTVLIGIVK…LINSSTTLTQ (289 aa)) enclose the ABC transmembrane type-1 domain. At 39–57 (LKYVVDDIIQGGGTASDKT) the chain is on the extracellular side. A helical transmembrane segment spans residues 58 to 78 (TSLFTIMAIMFALFLILRPPV). The Cytoplasmic segment spans residues 79-135 (EYYRQYFAQWTASKVLYDIRAKLFDHIQKLSLRFYANTRTGEVISRVINDVEQTKDF). The helical transmembrane segment at 136–156 (VITGLMNIWLDMLTILIVISI) threads the bilayer. Residues 157–163 (MLTLDVK) lie on the Extracellular side of the membrane. Residues 164-184 (LTLISIVLFPLYGISVKYFYG) traverse the membrane as a helical segment. Residues 185–243 (RLRKLTRERSQALAQVQGHLHERIQGMPVIRSFAIEDHEQAQFNEKNGHFLDKAIRHTN) are Cytoplasmic-facing. Residues 244-263 (WNAKTFAVVNTITDLAPLIV) form a helical membrane-spanning segment. Over 264–268 (IACAG) the chain is Extracellular. The chain crosses the membrane as a helical span at residues 269–288 (YFVINGPLTVGTMVAFVGYI). The Cytoplasmic segment spans residues 289 to 580 (DRMYNPVRRL…KHLFTIQNLN (292 aa)). An ABC transporter domain is found at 341 to 576 (VEFQNVSFQY…ESQYKHLFTI (236 aa)). 375 to 382 (GMSGGGKS) contributes to the ATP binding site.

Belongs to the ABC transporter superfamily. As to quaternary structure, homodimer.

The protein resides in the cell membrane. Its function is as follows. May be involved in multidrug export. Transmembrane domains (TMD) form a pore in the cell membrane and the ATP-binding domain (NBD) is responsible for energy generation. This chain is Putative multidrug export ATP-binding/permease protein YgaD (ygaD), found in Bacillus subtilis (strain 168).